A 662-amino-acid polypeptide reads, in one-letter code: Protein associated with UVRAG as autophagy enhancer (662 aa).

2 disordered regions span residues 1–34 and 58–131; these read MVSQ…RLLN and DVQQ…SLSS. Over residues 58–71 the composition is skewed to low complexity; that stretch reads DVQQQPQDLQSQVP. The segment covering 100–113 has biased composition (polar residues); that stretch reads AETTLSEDTTDSVG. Residues 114 to 131 show a composition bias toward low complexity; it reads SASPHGSSEKSSSFSLSS. Residue S157 is modified to Phosphoserine; by MTOR. The tract at residues 196–235 is interaction with UVRAG; sequence EVFVLPVDVEKENAHFYVADMIISAMEKMKCNILSQQQTE. K483, K523, K533, K573, and K633 each carry N6-acetyllysine.

In terms of assembly, interacts with UVRAG; the interaction is direct and promotes association with the PI3K/PI3KC3 and HOPS complexes. Interacts with STX17. Post-translationally, phosphorylated by MTOR at Ser-157 under nutrient-rich conditions. Phosphorylation prevents acetylation by KAT5/TIP60 and impairs RUBCNL/PACER function and autophagosome maturation. Under autophagy induction, Phosphorylation by MTOR is repressed, enabling acetylation by KAT5/TIP60. In terms of processing, acetylated by KAT5/TIP60 under autophagy induction, promoting autophagosome maturation and lipid metabolism. Acetylation is prevented by phosphorylation by MTOR. Lys-483 and Lys-573 constitute the key sites for tuning function in autophagy. Expressed weakly in cervical carcinoma cell lines.

The protein resides in the cytoplasmic vesicle. It is found in the autophagosome membrane. Functionally, regulator of autophagy that promotes autophagosome maturation by facilitating the biogenesis of phosphatidylinositol 3-phosphate (PtdIns(3)P) in late steps of autophagy. Acts by antagonizing RUBCN, thereby stimulating phosphatidylinositol 3-kinase activity of the PI3K/PI3KC3 complex. Following anchorage to the autophagosomal SNARE STX17, promotes the recruitment of PI3K/PI3KC3 and HOPS complexes to the autophagosome to regulate the fusion specificity of autophagosomes with late endosomes/lysosomes. Binds phosphoinositides phosphatidylinositol 3-phosphate (PtdIns(3)P), 4-phosphate (PtdIns(4)P) and 5-phosphate (PtdIns(5)P). In addition to its role in autophagy, acts as a regulator of lipid and glycogen homeostasis. May act as a tumor suppressor. The chain is Protein associated with UVRAG as autophagy enhancer from Homo sapiens (Human).